The chain runs to 463 residues: Glutamate--tRNA ligase 2 (463 aa).

A 'HIGH' region motif is present at residues 11-21; it reads PSPTGYLHIGG. The 'KMSKS' region signature appears at 240 to 244; that stretch reads KLSKR. Lys243 contributes to the ATP binding site.

This sequence belongs to the class-I aminoacyl-tRNA synthetase family. Glutamate--tRNA ligase type 1 subfamily. As to quaternary structure, monomer.

Its subcellular location is the cytoplasm. It carries out the reaction tRNA(Glu) + L-glutamate + ATP = L-glutamyl-tRNA(Glu) + AMP + diphosphate. Its function is as follows. Catalyzes the attachment of glutamate to tRNA(Glu) in a two-step reaction: glutamate is first activated by ATP to form Glu-AMP and then transferred to the acceptor end of tRNA(Glu). This chain is Glutamate--tRNA ligase 2, found in Campylobacter jejuni subsp. jejuni serotype O:6 (strain 81116 / NCTC 11828).